Here is a 354-residue protein sequence, read N- to C-terminus: MAPARRPAGARLLLVYAGLLAAAAAGLGSPEPGAPSRSRARREPPPGNELPRGPGESRAGPAARPPEPTAERAHSVDPRDAWMLFVRQSDKGVNGKKRSRGKAKKLKFGLPGPPGPPGPQGPPGPIIPPEALLKEFQLLLKGAVRQRERAEPEPCTCGPAGPVAASLAPVSATAGEDDDDVVGDVLALLAAPLAPGPRAPRVEAAFLCRLRRDALVERRALHELGVYYLPDAEGAFRRGPGLNLTSGQYRAPVAGFYALAATLHVALGEPPRRGPPRPRDHLRLLICIQSRCQRNASLEAIMGLESSSELFTISVNGVLYLQMGQWTSVFLDNASGCSLTVRSGSHFSAVLLGV.

The signal sequence occupies residues 1 to 28 (MAPARRPAGARLLLVYAGLLAAAAAGLG). Composition is skewed to low complexity over residues 26-37 (GLGSPEPGAPSR) and 51-62 (PRGPGESRAGPA). The interval 26–123 (GLGSPEPGAP…PGPPGPQGPP (98 aa)) is disordered. Basic and acidic residues predominate over residues 69–80 (TAERAHSVDPRD). A compositionally biased stretch (basic residues) spans 94-107 (NGKKRSRGKAKKLK). 6 positions are modified to hydroxyproline: proline 111, proline 113, proline 114, proline 116, proline 117, and proline 119. The span at 111–123 (PGPPGPPGPQGPP) shows a compositional bias: pro residues. Residues 199 to 354 (APRVEAAFLC…SHFSAVLLGV (156 aa)) form the C1q domain. N-linked (GlcNAc...) asparagine glycans are attached at residues asparagine 243, asparagine 295, and asparagine 333.

It belongs to the adipolin/erythroferrone family. Homodimer; disulfide-linked. Forms trimer, hexamers and higher molecular weight oligomers. May form heteromeric complexes with C1QTNF2 and C1QTNF12 and, to a lesser extent, with C1QTNF5 and C1QTNF10. Interacts with BMP5 and BMP7; the interaction inhibits BMP-induced transcription of HAMP. Interacts with BMP6; the interaction inhibits BMP-induced transcription of HAMP. Interacts with BMP2. Interacts with heterodimers composed of BMP2 and BMP6 in vitro, the interaction inhibits the heterodimer binding to its receptor BMPR1A /ALK3 and thereby suppresses expression of HAMP. N-glycosylated; required for secretion of the mature protein.

It localises to the secreted. Its function is as follows. Iron-regulatory hormone that acts as an erythroid regulator after hemorrhage: produced by erythroblasts following blood loss and mediates suppression of hepcidin (HAMP) expression in the liver, thereby promoting increased iron absorption and mobilization from stores. Promotes lipid uptake into adipocytes and hepatocytes via transcriptional up-regulation of genes involved in fatty acid uptake. Inhibits apoptosis and inflammatory response in cardiomyocytes via promotion of sphingosine-1-phosphate (S1P) and cAMP-dependent activation of AKT signaling. Inhibits autophagy induced by nutrient deficiency in hepatocytes via promoting the phosphorylation of IRS1, AKT, and MTOR, and thereby subsequent activation of the AKT-MTOR signaling pathway. Negatively regulates the differentiation of osteoblasts, potentially via sequestering BMP2, and thereby inhibits the activation of SMAD signaling. The reduction in BMP2 signaling in osteoblasts also results in an increase in expression of the osteoclastogenesis-promoting factors TNFSF11/RANKL and SOST, thereby indirectly promotes bone resorption. In Homo sapiens (Human), this protein is Erythroferrone.